The sequence spans 322 residues: Interferon regulatory factor 1 (322 aa).

The segment at residues 5–113 is a DNA-binding region (IRF tryptophan pentad repeat); that stretch reads RMRMRPWLEM…SAVRVYRMLP (109 aa). Lysine 78 is subject to N6-acetyllysine. A disordered region spans residues 92 to 164; the sequence is EEVKDQSRNK…STLPDDHSNY (73 aa). Over residues 146–157 the composition is skewed to polar residues; that stretch reads DTFSDGLSSSTL. Residues lysine 276 and lysine 296 each participate in a glycyl lysine isopeptide (Lys-Gly) (interchain with G-Cter in SUMO) cross-link.

This sequence belongs to the IRF family. Monomer. Homodimer. Interacts with EP300. Interacts with MYD88. Interacts with PIAS3. Interacts with SPOP. In terms of processing, phosphorylated by CK2 and this positively regulates its activity. Sumoylation represses the transcriptional activity and displays enhanced resistance to protein degradation. Sumoylated by UBE2I/UBC9 and SUMO1. Inactivates the tumor suppressor activity. Elevated levels in tumor cells. Major site is Lys-276. Sumoylation is enhanced by PIAS3. Desumoylated by SENP1 in tumor cells and appears to compete with ubiquitination on C-terminal sites. Post-translationally, ubiquitinated in a SPOP-depedent manner. Appears to compete with sumoylation on C-terminal sites.

It localises to the nucleus. It is found in the cytoplasm. Activated by MYD88. Functionally, transcriptional regulator which displays a remarkable functional diversity in the regulation of cellular responses. Regulates transcription of IFN and IFN-inducible genes, host response to viral and bacterial infections, regulation of many genes expressed during hematopoiesis, inflammation, immune responses and cell proliferation and differentiation, regulation of the cell cycle and induction of growth arrest and programmed cell death following DNA damage. Stimulates both innate and acquired immune responses through the activation of specific target genes and can act as a transcriptional activator and repressor regulating target genes by binding to an interferon-stimulated response element (ISRE) in their promoters. Has an essentail role in IFNG-dependent immunity to mycobacteria. Binds to a consensus sequence in gene promoters. Its target genes for transcriptional activation activity include: genes involved in anti-viral response, such as IFN-alpha/beta, RIGI, TNFSF10/TRAIL, ZBP1, OAS1/2, PIAS1/GBP, EIF2AK2/PKR and RSAD2/viperin; antibacterial response, such as GBP2, GBP5 and NOS2/INOS; anti-proliferative response, such as p53/TP53, LOX and CDKN1A; apoptosis, such as BBC3/PUMA, CASP1, CASP7 and CASP8; immune response, such as IL7, IL12A/B and IL15, PTGS2/COX2 and CYBB; DNA damage responses and DNA repair, such as POLQ/POLH; MHC class I expression, such as TAP1, PSMB9/LMP2, PSME1/PA28A, PSME2/PA28B and B2M and MHC class II expression, such as CIITA; metabolic enzymes, such as ACOD1/IRG1. Represses genes involved in anti-proliferative response, such as BIRC5/survivin, CCNB1, CCNE1, CDK1, CDK2 and CDK4 and in immune response, such as FOXP3, IL4, ANXA2 and TLR4. Stimulates p53/TP53-dependent transcription through enhanced recruitment of EP300 leading to increased acetylation of p53/TP53. Plays an important role in immune response directly affecting NK maturation and activity, macrophage production of IL12, Th1 development and maturation of CD8+ T-cells. Also implicated in the differentiation and maturation of dendritic cells and in the suppression of regulatory T (Treg) cells development. Acts as a tumor suppressor and plays a role not only in antagonism of tumor cell growth but also in stimulating an immune response against tumor cells. In Bos taurus (Bovine), this protein is Interferon regulatory factor 1 (IRF1).